A 348-amino-acid polypeptide reads, in one-letter code: Ion-translocating oxidoreductase complex subunit D (348 aa).

The next 5 membrane-spanning stretches (helical) occupy residues 19-39, 41-61, 66-86, 87-107, and 122-142; these read FMLW…AFFG, GVVI…IVVA, KSTT…ILAM, AIPP…ALLL, and PAMV…TSWL. At T186 the chain carries FMN phosphoryl threonine. Transmembrane regions (helical) follow at residues 212–232, 236–256, 265–285, 291–311, and 315–335; these read IFAR…LFLL, IIHW…SALT, LNVL…FIAT, SITP…AYLI, and GSYP…VPLI.

This sequence belongs to the NqrB/RnfD family. The complex is composed of six subunits: RnfA, RnfB, RnfC, RnfD, RnfE and RnfG. It depends on FMN as a cofactor.

It localises to the cell inner membrane. Part of a membrane-bound complex that couples electron transfer with translocation of ions across the membrane. The polypeptide is Ion-translocating oxidoreductase complex subunit D (Haemophilus ducreyi (strain 35000HP / ATCC 700724)).